A 940-amino-acid polypeptide reads, in one-letter code: Isoleucine--tRNA ligase (940 aa).

Positions 58–68 (PYANGSIHIGH) match the 'HIGH' region motif. Glu-563 is a binding site for L-isoleucyl-5'-AMP. Positions 604-608 (KMSKS) match the 'KMSKS' region motif. ATP is bound at residue Lys-607. Residues Cys-902, Cys-905, Cys-922, and Cys-925 each coordinate Zn(2+).

Belongs to the class-I aminoacyl-tRNA synthetase family. IleS type 1 subfamily. As to quaternary structure, monomer. Zn(2+) serves as cofactor.

It localises to the cytoplasm. It carries out the reaction tRNA(Ile) + L-isoleucine + ATP = L-isoleucyl-tRNA(Ile) + AMP + diphosphate. Functionally, catalyzes the attachment of isoleucine to tRNA(Ile). As IleRS can inadvertently accommodate and process structurally similar amino acids such as valine, to avoid such errors it has two additional distinct tRNA(Ile)-dependent editing activities. One activity is designated as 'pretransfer' editing and involves the hydrolysis of activated Val-AMP. The other activity is designated 'posttransfer' editing and involves deacylation of mischarged Val-tRNA(Ile). The chain is Isoleucine--tRNA ligase from Marinomonas sp. (strain MWYL1).